A 446-amino-acid chain; its full sequence is Sorting nexin-30 (446 aa).

Polar residues predominate over residues 1–18; the sequence is MSGSSTPKSLPTSGQQSL. Residues 1 to 84 form a disordered region; sequence MSGSSTPKSL…SSPASSSSLL (84 aa). A compositionally biased stretch (low complexity) spans 70 to 84; that stretch reads TPADTSSPASSSSLL. One can recognise a PX domain in the interval 98–219; the sequence is RDLFVTVDDP…VFLTAKDLNS (122 aa). R141, Q143, K171, and R185 together coordinate a 1,2-diacyl-sn-glycero-3-phospho-(1D-myo-inositol-3-phosphate). The 204-residue stretch at 243–446 folds into the BAR domain; that stretch reads KLRNRPVEFA…PLLQDKQEPK (204 aa).

The protein belongs to the sorting nexin family.

Its subcellular location is the early endosome membrane. Its function is as follows. Involved in the regulation of endocytosis and in several stages of intracellular trafficking. Together with snx4, involved in autophagosome assembly. This is Sorting nexin-30 (snx30) from Xenopus tropicalis (Western clawed frog).